A 460-amino-acid polypeptide reads, in one-letter code: Ribosomal protein uS12 methylthiotransferase RimO (460 aa).

The MTTase N-terminal domain maps to 17–128; it reads PAVAVLHLGC…IVQVIQRAER (112 aa). Positions 26, 62, 91, 166, 170, and 173 each coordinate [4Fe-4S] cluster. The region spanning 152–381 is the Radical SAM core domain; sequence TTHAPVAYLR…MQLQQGIAFR (230 aa). Positions 384–450 constitute a TRAM domain; that stretch reads REQVGQVVPV…PYDLFGQVVE (67 aa).

It belongs to the methylthiotransferase family. RimO subfamily. The cofactor is [4Fe-4S] cluster.

It localises to the cytoplasm. It catalyses the reaction L-aspartate(89)-[ribosomal protein uS12]-hydrogen + (sulfur carrier)-SH + AH2 + 2 S-adenosyl-L-methionine = 3-methylsulfanyl-L-aspartate(89)-[ribosomal protein uS12]-hydrogen + (sulfur carrier)-H + 5'-deoxyadenosine + L-methionine + A + S-adenosyl-L-homocysteine + 2 H(+). Catalyzes the methylthiolation of an aspartic acid residue of ribosomal protein uS12. This chain is Ribosomal protein uS12 methylthiotransferase RimO, found in Synechococcus sp. (strain JA-3-3Ab) (Cyanobacteria bacterium Yellowstone A-Prime).